A 284-amino-acid polypeptide reads, in one-letter code: Putative thiosulfate sulfurtransferase SseB (284 aa).

2 consecutive Rhodanese domains span residues 20-138 and 169-280; these read AGDP…SIET and GAGG…RPVG. A substrate-binding site is contributed by Arg183. Residue Cys241 is the Cysteine persulfide intermediate of the active site.

It carries out the reaction thiosulfate + hydrogen cyanide = thiocyanate + sulfite + 2 H(+). This chain is Putative thiosulfate sulfurtransferase SseB (sseB), found in Mycobacterium tuberculosis (strain CDC 1551 / Oshkosh).